Reading from the N-terminus, the 336-residue chain is USG-1 protein homolog (336 aa).

Belongs to the aspartate-semialdehyde dehydrogenase family.

This is USG-1 protein homolog (usg) from Pseudomonas aeruginosa (strain ATCC 15692 / DSM 22644 / CIP 104116 / JCM 14847 / LMG 12228 / 1C / PRS 101 / PAO1).